We begin with the raw amino-acid sequence, 208 residues long: V-type proton ATPase subunit E (208 aa).

The protein belongs to the V-ATPase E subunit family.

Produces ATP from ADP in the presence of a proton gradient across the membrane. The chain is V-type proton ATPase subunit E from Chlamydia trachomatis serovar L2 (strain ATCC VR-902B / DSM 19102 / 434/Bu).